The primary structure comprises 241 residues: DNA repair protein RecO (241 aa).

It belongs to the RecO family.

Involved in DNA repair and RecF pathway recombination. In Phocaeicola vulgatus (strain ATCC 8482 / DSM 1447 / JCM 5826 / CCUG 4940 / NBRC 14291 / NCTC 11154) (Bacteroides vulgatus), this protein is DNA repair protein RecO.